A 211-amino-acid polypeptide reads, in one-letter code: SsrA-binding protein (211 aa).

The tract at residues 168 to 211 (KHRLRRPRAQRNTQRSVTPRRTRENKNVRGSKARSARRNVRREN) is disordered. Residues 177–186 (QRNTQRSVTP) are compositionally biased toward polar residues. Over residues 196–211 (RGSKARSARRNVRREN) the composition is skewed to basic residues.

This sequence belongs to the SmpB family.

The protein resides in the cytoplasm. Functionally, required for rescue of stalled ribosomes mediated by trans-translation. Binds to transfer-messenger RNA (tmRNA), required for stable association of tmRNA with ribosomes. tmRNA and SmpB together mimic tRNA shape, replacing the anticodon stem-loop with SmpB. tmRNA is encoded by the ssrA gene; the 2 termini fold to resemble tRNA(Ala) and it encodes a 'tag peptide', a short internal open reading frame. During trans-translation Ala-aminoacylated tmRNA acts like a tRNA, entering the A-site of stalled ribosomes, displacing the stalled mRNA. The ribosome then switches to translate the ORF on the tmRNA; the nascent peptide is terminated with the 'tag peptide' encoded by the tmRNA and targeted for degradation. The ribosome is freed to recommence translation, which seems to be the essential function of trans-translation. The polypeptide is SsrA-binding protein (Tropheryma whipplei (strain Twist) (Whipple's bacillus)).